The sequence spans 229 residues: DNA mismatch repair protein MutH (229 aa).

Belongs to the MutH family.

It is found in the cytoplasm. In terms of biological role, sequence-specific endonuclease that cleaves unmethylated GATC sequences. It is involved in DNA mismatch repair. The sequence is that of DNA mismatch repair protein MutH from Escherichia coli (strain K12 / MC4100 / BW2952).